Reading from the N-terminus, the 278-residue chain is Orotidine 5'-phosphate decarboxylase (278 aa).

Lysine 95 (proton donor) is an active-site residue.

The protein belongs to the OMP decarboxylase family. Type 2 subfamily.

The catalysed reaction is orotidine 5'-phosphate + H(+) = UMP + CO2. It functions in the pathway pyrimidine metabolism; UMP biosynthesis via de novo pathway; UMP from orotate: step 2/2. The chain is Orotidine 5'-phosphate decarboxylase from Corynebacterium glutamicum (strain ATCC 13032 / DSM 20300 / JCM 1318 / BCRC 11384 / CCUG 27702 / LMG 3730 / NBRC 12168 / NCIMB 10025 / NRRL B-2784 / 534).